We begin with the raw amino-acid sequence, 914 residues long: Neuropilin-1 (914 aa).

A signal peptide spans 1–18; that stretch reads MDWGLFLHCAALTFTLSR. Residues 20 to 847 lie on the Extracellular side of the membrane; that stretch reads LRSDKCGDTI…PGNVLKTLDP (828 aa). 3 disulfides stabilise this stretch: Cys-25–Cys-52, Cys-80–Cys-102, and Cys-145–Cys-171. 2 consecutive CUB domains span residues 25–139 and 145–263; these read CGDT…YEVF and CSRN…YSVS. N-linked (GlcNAc...) asparagine glycosylation is present at Asn-148. The Ca(2+) site is built by Glu-193, Asp-207, and Asp-248. Cys-204 and Cys-226 are joined by a disulfide. The N-linked (GlcNAc...) asparagine glycan is linked to Asn-259. 2 cysteine pairs are disulfide-bonded: Cys-273-Cys-422 and Cys-429-Cys-581. 2 consecutive F5/8 type C domains span residues 273–422 and 429–581; these read CMEP…VYGC and CSGM…LLGC. The N-linked (GlcNAc...) asparagine glycan is linked to Asn-520. Ser-610 carries O-linked (Xyl...) (chondroitin sulfate) serine; alternate glycosylation. Ser-610 carries an O-linked (Xyl...) (heparan sulfate) serine; alternate glycan. One can recognise an MAM domain in the interval 636–801; the sequence is PYNLNCGFGW…NHISQEDCQK (166 aa). The tract at residues 809–829 is disordered; sequence IVEEDPESNQTGFTPSYRTDE. Over residues 816 to 825 the composition is skewed to polar residues; the sequence is SNQTGFTPSY. N-linked (GlcNAc...) asparagine glycosylation occurs at Asn-817. Residues 848-870 traverse the membrane as a helical segment; that stretch reads ILITIIAMSALGVLLGAICGVVL. Residues 871–914 are Cytoplasmic-facing; that stretch reads YCACWHNGMSERNLSALENYNFELVDGVKLKKDKLNTQNSYSEA.

Belongs to the neuropilin family. In terms of assembly, homodimer, and heterodimer. In terms of tissue distribution, developing nervous system; optic tectum (layers D and E of SGFS), amacrine cells of retina, neurites of dorsal root ganglia. Also expressed in non-neuronal cells, e.g. blood vessels in the entire embryo.

It localises to the mitochondrion membrane. Its subcellular location is the cell membrane. Functionally, receptor involved in the development of the cardiovascular system, in angiogenesis, in the formation of certain neuronal circuits and in organogenesis outside the nervous system. Mediates the chemorepulsant activity of semaphorins. Binding to VEGFA initiates a signaling pathway needed for motor neuron axon guidance and cell body migration, including for the caudal migration of facial motor neurons from rhombomere 4 to rhombomere 6 during embryonic development. Regulates mitochondrial iron transport via interaction. This Gallus gallus (Chicken) protein is Neuropilin-1 (NRP1).